A 214-amino-acid chain; its full sequence is Anti-sigma-F factor NrsF (214 aa).

Residues 1 to 25 (MRTDDLIDALAADAGRGTEPAPPRR) are Cytoplasmic-facing. The chain crosses the membrane as a helical span at residues 26–46 (LALVAGLGGVAALLLVLGWLQ). Topologically, residues 47–53 (ARPDLGQ) are periplasmic. A helical transmembrane segment spans residues 54 to 74 (AILGPMFWVKAIYTGLLGLAG). At 75-90 (YLAVERLSRPGGSGRR) the chain is on the cytoplasmic side. The helical transmembrane segment at 91-111 (GWIIGAVVFGACAVAGIYQAI) threads the bilayer. Over 112–134 (TSPDVQAALKLLHGYSWRSCSPR) the chain is Periplasmic. The chain crosses the membrane as a helical span at residues 135–155 (ILVLGLPMLALGLWALRGMAP). The Cytoplasmic portion of the chain corresponds to 156-158 (TRP). Residues 159–179 (GLAGFAMGLFSGGVVATLYGL) traverse the membrane as a helical segment. The Periplasmic portion of the chain corresponds to 180–185 (HCPEHT). A helical membrane pass occupies residues 186–206 (FTFLALWYSLGVLALGLIGGW). Residues 207 to 214 (AGRWLLRW) lie on the Cytoplasmic side of the membrane.

The protein belongs to the NrsF anti-sigma-F factor family.

The protein localises to the cell inner membrane. Its function is as follows. An anti-sigma factor for extracytoplasmic function (ECF) sigma factor sigma-F (SigF), which responds to chromate and cadmium. Overexpression leads to loss of response to dichromate. ECF sigma factors are held in an inactive form by a cognate anti-sigma factor. The sequence is that of Anti-sigma-F factor NrsF from Caulobacter vibrioides (strain NA1000 / CB15N) (Caulobacter crescentus).